Consider the following 506-residue polypeptide: RNA-splicing ligase RtcB homolog (506 aa).

Aspartate 120, cysteine 123, histidine 228, histidine 260, and histidine 354 together coordinate Mn(2+). Position 227-231 (227-231 (NHYAE)) interacts with GMP. GMP contacts are provided by residues 354–355 (HN), 403–406 (GGTM), serine 410, 429–432 (HGAG), and lysine 505. Residue histidine 429 is the GMP-histidine intermediate of the active site.

Belongs to the RtcB family. As to quaternary structure, catalytic component of the tRNA-splicing ligase complex. It depends on Mn(2+) as a cofactor.

It catalyses the reaction a 3'-end 3'-phospho-ribonucleotide-RNA + a 5'-end dephospho-ribonucleoside-RNA + GTP = a ribonucleotidyl-ribonucleotide-RNA + GMP + diphosphate. The enzyme catalyses a 3'-end 2',3'-cyclophospho-ribonucleotide-RNA + a 5'-end dephospho-ribonucleoside-RNA + GTP + H2O = a ribonucleotidyl-ribonucleotide-RNA + GMP + diphosphate + H(+). Its function is as follows. Catalytic subunit of the tRNA-splicing ligase complex that acts by directly joining spliced tRNA halves to mature-sized tRNAs by incorporating the precursor-derived splice junction phosphate into the mature tRNA as a canonical 3',5'-phosphodiester. May act as an RNA ligase with broad substrate specificity, and may function toward other RNAs. The polypeptide is RNA-splicing ligase RtcB homolog (Plasmodium falciparum (isolate 3D7)).